We begin with the raw amino-acid sequence, 307 residues long: 17-beta-hydroxysteroid dehydrogenase type 3 (307 aa).

A helical membrane pass occupies residues 6–26 (IIFVLTGTCAILVFGGKIASL). 47–76 (GKWAVITGGSDGIGRAYAEELSKQGMSVII) provides a ligand contact to NADP(+). Residue serine 187 participates in substrate binding. Tyrosine 200 functions as the Proton acceptor in the catalytic mechanism.

The protein belongs to the short-chain dehydrogenases/reductases (SDR) family. In terms of tissue distribution, expression shows strong sexual dimorphism. In female, highly expressed in ovaries, and at lower levels in skin muscle, eyes and liver. In males, strongly expressed in liver and at lower levels in testis, spleen, kidney, intestine and muscle.

It localises to the endoplasmic reticulum. It is found in the membrane. It carries out the reaction a 17beta-hydroxy steroid + NADP(+) = a 17-oxo steroid + NADPH + H(+). The catalysed reaction is testosterone + NADP(+) = androst-4-ene-3,17-dione + NADPH + H(+). It catalyses the reaction 3beta-hydroxyandrost-5-en-17-one + NADPH + H(+) = androst-5-en-3beta,17beta-diol + NADP(+). The enzyme catalyses 3beta-hydroxy-5alpha-androstan-17-one + NADPH + H(+) = 5alpha-androstane-3beta,17beta-diol + NADP(+). It carries out the reaction androst-4-ene-3,11,17-trione + NADPH + H(+) = 17beta-hydroxyandrost-4-ene-3,11-dione + NADP(+). The catalysed reaction is 11beta-hydroxyandrost-4-ene-3,17-dione + NADPH + H(+) = 11beta,17beta-dihydroxyandrost-4-ene-3-one + NADP(+). The protein operates within hormone biosynthesis; testosterone biosynthesis. It participates in steroid metabolism. Catalyzes the conversion of 17-oxosteroids to 17beta-hydroxysteroids in the presence of NADPH. Favors the reduction of androstenedione to testosterone. Testosterone is the key androgen driving male development and function. Among further tested androgens epiandrosterone and dehydroepiandrosterone are accepted as substrates and reduced at C-17. Can also reduce 11-ketoandrostenedione as well as 11beta-hydroxyandrostenedione at C-17 to the respective testosterone forms. Cannot use androsterone and androstanedione as substrates. This chain is 17-beta-hydroxysteroid dehydrogenase type 3 (hsd17b3), found in Danio rerio (Zebrafish).